The chain runs to 167 residues: Anaerobic nitrite reductase NSHB4 (167 aa).

The 151-residue stretch at 12–162 folds into the Globin domain; sequence RFTEEQEALV…LVAAIKEGMK (151 aa). A Homodimerization motif is present at residues 45-49; that stretch reads EVAPS. Heme b-binding residues include Ser55, His73, Arg103, Thr107, and His108. The short motif at 115–127 is the Homodimerization element; it reads DTHFEVARFALLE.

The protein belongs to the plant globin family. In terms of assembly, homodimer. It depends on heme b as a cofactor.

Its subcellular location is the cytoplasm. The protein resides in the nucleus. The enzyme catalyses Fe(III)-heme b-[protein] + nitric oxide + H2O = Fe(II)-heme b-[protein] + nitrite + 2 H(+). Phytoglobin that reduces nitrite to nitric oxide under anoxic conditions (e.g. during flooding or in waterlogged soil). May not function as an oxygen storage or transport protein. Has an unusually high affinity for O(2) through an hexacoordinate heme iron because of a very low dissociation constant. This chain is Anaerobic nitrite reductase NSHB4, found in Oryza sativa subsp. indica (Rice).